The primary structure comprises 114 residues: Ribonuclease P protein component (114 aa).

The protein belongs to the RnpA family. As to quaternary structure, consists of a catalytic RNA component (M1 or rnpB) and a protein subunit.

It carries out the reaction Endonucleolytic cleavage of RNA, removing 5'-extranucleotides from tRNA precursor.. RNaseP catalyzes the removal of the 5'-leader sequence from pre-tRNA to produce the mature 5'-terminus. It can also cleave other RNA substrates such as 4.5S RNA. The protein component plays an auxiliary but essential role in vivo by binding to the 5'-leader sequence and broadening the substrate specificity of the ribozyme. The sequence is that of Ribonuclease P protein component from Buchnera aphidicola subsp. Schizaphis graminum (strain Sg).